A 399-amino-acid polypeptide reads, in one-letter code: Putative glutamate--cysteine ligase 2 (399 aa).

The segment at 377–399 is disordered; it reads PAVGSSHGRTDPSRNGGPSHAGA.

This sequence belongs to the glutamate--cysteine ligase type 2 family. YbdK subfamily.

The enzyme catalyses L-cysteine + L-glutamate + ATP = gamma-L-glutamyl-L-cysteine + ADP + phosphate + H(+). In terms of biological role, ATP-dependent carboxylate-amine ligase which exhibits weak glutamate--cysteine ligase activity. This is Putative glutamate--cysteine ligase 2 from Thermobifida fusca (strain YX).